A 267-amino-acid chain; its full sequence is NAD kinase 1 (267 aa).

Asp45 functions as the Proton acceptor in the catalytic mechanism. NAD(+) contacts are provided by residues 45–46, 122–123, Arg149, Asp151, and Ala186; these read DG and NE.

It belongs to the NAD kinase family. Requires a divalent metal cation as cofactor.

It localises to the cytoplasm. The catalysed reaction is NAD(+) + ATP = ADP + NADP(+) + H(+). In terms of biological role, involved in the regulation of the intracellular balance of NAD and NADP, and is a key enzyme in the biosynthesis of NADP. Catalyzes specifically the phosphorylation on 2'-hydroxyl of the adenosine moiety of NAD to yield NADP. The protein is NAD kinase 1 of Oceanobacillus iheyensis (strain DSM 14371 / CIP 107618 / JCM 11309 / KCTC 3954 / HTE831).